Reading from the N-terminus, the 173-residue chain is MKKLTVARLGRTVGLHGDMKLHILTDFPEQFQKGSTFESDRGSLTIESVNPARGTVKFQGIDSVDEAKKYTNAYLYSDEETTKKSFPLGEDEYFWFDILGCDVFEEGKRLGKVVDIQRLPAGDYLLVETDKSFVDMKKAKSFLIPFLDMFIEDVHLDQKRIDTKGAQDILEAS.

The 80-residue stretch at 90–169 (EDEYFWFDIL…RIDTKGAQDI (80 aa)) folds into the PRC barrel domain.

Belongs to the RimM family. Binds ribosomal protein uS19.

The protein resides in the cytoplasm. Functionally, an accessory protein needed during the final step in the assembly of 30S ribosomal subunit, possibly for assembly of the head region. Essential for efficient processing of 16S rRNA. May be needed both before and after RbfA during the maturation of 16S rRNA. It has affinity for free ribosomal 30S subunits but not for 70S ribosomes. The protein is Ribosome maturation factor RimM of Nitratiruptor sp. (strain SB155-2).